Consider the following 738-residue polypeptide: Platelet endothelial cell adhesion molecule (738 aa).

Positions 1–27 are cleaved as a signal peptide; that stretch reads MQPRWAQGATMWLGVLLTLLLCSSLEG. Residues 28-601 are Extracellular-facing; sequence QENSFTINSV…VRVILAPWKK (574 aa). 3 consecutive Ig-like C2-type domains span residues 35-121, 145-233, and 236-315; these read NSVD…KTTA, GGIV…TESF, and PKFH…SKVS. N52, N84, and N151 each carry an N-linked (GlcNAc...) asparagine glycan. Cysteines 57 and 109 form a disulfide. 2 disulfide bridges follow: C152–C206 and C256–C304. N-linked (GlcNAc...) asparagine glycans are attached at residues N301, N320, N344, N356, N453, and N551. 3 consecutive Ig-like C2-type domains span residues 328-401, 424-493, and 499-591; these read PELE…NTVQ, GQTI…EVLR, and PVDE…KILT. 3 cysteine pairs are disulfide-bonded: C347–C386, C431–C476, and C523–C572. A helical transmembrane segment spans residues 602–620; that stretch reads GLIAVVIIGVIIALLIIAA. Residues 621 to 738 are Cytoplasmic-facing; the sequence is KCYFLRKAKA…SRTEGSLDGT (118 aa). The S-palmitoyl cysteine moiety is linked to residue C622. Residues 658-715 form a disordered region; sequence EANSHYGHNDDVRNHAMKPINDNKEPLNSDVQYTEVQVSSAESHKDLGKKDTETVYSE. Positions 686-698 are enriched in polar residues; the sequence is SDVQYTEVQVSSA. Short sequence motifs (ITIM motif) lie at residues 688–693 and 711–716; these read VQYTEV and TVYSEV. A phosphotyrosine; by FER mark is found at Y690 and Y713. The segment covering 699–715 has biased composition (basic and acidic residues); the sequence is ESHKDLGKKDTETVYSE. Positions 709-729 are membrane-bound segment which detaches upon phosphorylation; sequence TETVYSEVRKAVPDAVESRYS. Positions 721-738 are may play a role in cytoprotective signaling; sequence PDAVESRYSRTEGSLDGT. 2 positions are modified to phosphoserine: S729 and S734.

Trans-homodimer (via Ig-like C2-type 1 and Ig-like C2-type 2 domains); trans-homodimerization is required for cell-cell interaction. Forms a complex with BDKRB2 and GNAQ. Interacts with BDKRB2 and GNAQ. Interacts with PTPN11; Tyr-713 is critical for PTPN11 recruitment. Interacts with FER. Interacts (via Ig-like C2-type domain 6) with CD177; the interaction is Ca(2+)-dependent; the interaction is direct. Post-translationally, phosphorylated on Ser and Tyr residues after cellular activation by src kinases. Upon activation, phosphorylated on Ser-729 which probably initiates the dissociation of the membrane-interaction segment (residues 709-729) from the cell membrane allowing the sequential phosphorylation of Tyr-713 and Tyr-690. Constitutively phosphorylated on Ser-734 in resting platelets. Phosphorylated on tyrosine residues by FER and FES in response to FCER1 activation. In endothelial cells Fyn mediates mechanical-force (stretch or pull) induced tyrosine phosphorylation. Palmitoylation by ZDHHC21 is necessary for cell surface expression in endothelial cells and enrichment in membrane rafts. Expressed on platelets and leukocytes and is primarily concentrated at the borders between endothelial cells. Expressed in human umbilical vein endothelial cells (HUVECs) (at protein level). Expressed on neutrophils (at protein level). Isoform Long predominates in all tissues examined. Isoform Delta12 is detected only in trachea. Isoform Delta14-15 is only detected in lung. Isoform Delta14 is detected in all tissues examined with the strongest expression in heart. Isoform Delta15 is expressed in brain, testis, ovary, cell surface of platelets, human umbilical vein endothelial cells (HUVECs), Jurkat T-cell leukemia, human erythroleukemia (HEL) and U-937 histiocytic lymphoma cell lines (at protein level).

It localises to the cell membrane. The protein resides in the membrane raft. It is found in the cell junction. Its function is as follows. Cell adhesion molecule which is required for leukocyte transendothelial migration (TEM) under most inflammatory conditions. Tyr-690 plays a critical role in TEM and is required for efficient trafficking of PECAM1 to and from the lateral border recycling compartment (LBRC) and is also essential for the LBRC membrane to be targeted around migrating leukocytes. Trans-homophilic interaction may play a role in endothelial cell-cell adhesion via cell junctions. Heterophilic interaction with CD177 plays a role in transendothelial migration of neutrophils. Homophilic ligation of PECAM1 prevents macrophage-mediated phagocytosis of neighboring viable leukocytes by transmitting a detachment signal. Promotes macrophage-mediated phagocytosis of apoptotic leukocytes by tethering them to the phagocytic cells; PECAM1-mediated detachment signal appears to be disabled in apoptotic leukocytes. Modulates bradykinin receptor BDKRB2 activation. Regulates bradykinin- and hyperosmotic shock-induced ERK1/2 activation in endothelial cells. Induces susceptibility to atherosclerosis. Functionally, does not protect against apoptosis. The protein is Platelet endothelial cell adhesion molecule (PECAM1) of Homo sapiens (Human).